Reading from the N-terminus, the 482-residue chain is BTB/POZ domain and ankyrin repeat-containing protein NOOT1 (482 aa).

The 83-residue stretch at 25-107 folds into the BTB domain; that stretch reads SDVVFSVEGR…LYSGQVSIVP (83 aa). Residues 113–127 form a C2HC NPR-type zinc finger; the sequence is RPNCGDRGCWHTHCT. The Zn(2+) site is built by Cys116, Cys121, His123, and Cys126. ANK repeat units lie at residues 249 to 278, 279 to 308, 313 to 342, and 346 to 380; these read QKIRRMRRALDSSDVELVKLMVMGEGLNLD, EALALPYAVENCSREVVKALLELGAADVNF, TGKTPLHIAAEMVSPDMVAVLLDHHADPNV, and DGVTPLDILRTLTSDFLFKGAVPGLTHIEPNKLRL. The interval 395 to 434 is disordered; it reads EEGNNNNSNNNNNATASSATNMYPHHNMNEDHHHSHNNNN. Over residues 398 to 415 the composition is skewed to low complexity; the sequence is NNNNSNNNNNATASSATN.

The protein belongs to the plant 'ANKYRIN-BTB/POZ' family. 'NOOT-BOP-COCH-like' (NBCL) subfamily. Homodimer. As to expression, expressed in the shoot apical meristem (SAM) at the base of the developing leaf where stipules are formed. Associated with functional and vestigial abscission zones (AZs), including pulvini.

It localises to the nucleus. It is found in the cytoplasm. The protein resides in the cell membrane. The protein operates within protein modification; protein ubiquitination. Functionally, may act as a substrate-specific adapter of an E3 ubiquitin-protein ligase complex (CUL3-RBX1-BTB) which mediates the ubiquitination and subsequent proteasomal degradation of target proteins. Transcriptional co-regulator involved in the promotion of leaf and floral meristem fate and determinacy. Promotes normal stipule growth and development. Required for the abscission of senescent organs, probably by regulating the cell wall disorganization in abscission zones (AZs, e.g. pulvini at the base of leaves). Involved in the coordination of the symbiotic nodule developmental program. Promotes the formation of root nodules by interacting directly with APP1 to modulate the expression of the nuclear transcription factor Y subunit (NF-YA1), a key nodulin. Necessary for the robust maintenance of nodule identity throughout the nodule developmental program. Involved in the regulation of indeterminate nodule identity in association with NOOT2. This chain is BTB/POZ domain and ankyrin repeat-containing protein NOOT1, found in Medicago truncatula (Barrel medic).